The sequence spans 171 residues: MPLPIYKHVSFFCISKCMDKSRNFQPNEGEEEMKKSWVRHEKLCAQLEACSLDLKQNEAQMTILTATGGELKEKHKKIRGLLDEAKANGQQKELEELSKEIENVETQTRIWLNELHDVHDKRVDIDCQMIRLGSEVKKNETYVQLACIDIERMELRHEIRWKKFLQNNPCK.

This is an uncharacterized protein from Caenorhabditis elegans.